Consider the following 201-residue polypeptide: MTLRPSLLPLHLLLLLLLSAAVCRAEAGLETESPVRTLQVETLVEPPEPCAEPAAFGDTLHIHYTGSLVDGRIIDTSLTRDPLVIELGQKQVIPGLEQSLLDMCVGEKRRAIIPSHLAYGKRGFPPSVPADAVVQYDVELIALIRANYWLKLVKGILPLVGMAMVPALLGLIGYHLYRKANRPKVSKKKLKEEKRNKSKKK.

The first 27 residues, 1-27, serve as a signal peptide directing secretion; that stretch reads MTLRPSLLPLHLLLLLLLSAAVCRAEA. The PPIase FKBP-type domain occupies 57–144; that stretch reads GDTLHIHYTG…QYDVELIALI (88 aa). The chain crosses the membrane as a helical span at residues 156 to 176; sequence ILPLVGMAMVPALLGLIGYHL.

The protein belongs to the FKBP-type PPIase family. As to quaternary structure, interacts with IFITM5.

It localises to the membrane. It catalyses the reaction [protein]-peptidylproline (omega=180) = [protein]-peptidylproline (omega=0). PPIases accelerate the folding of proteins during protein synthesis. The chain is Peptidyl-prolyl cis-trans isomerase FKBP11 (FKBP11) from Homo sapiens (Human).